A 465-amino-acid chain; its full sequence is MNQDTICAIATAQGGAIGSIRVSGPEAITITGRIFTPAKSGKLLSEQKPYTLTFGRIYNGEEMIDEVLVSLFRAPHSYTGEDSTEITCHGSSYILQQVMQLLIKNGCRMAQPGEYTQRAFLNGKMDLSQAEAVADLIASSSAATHRLALSQMRGGFSKELTTLREKLLNFTSMIELELDFSEEDVEFADRSALRRLADEIEEVIARLANSFSVGNVIKNGVPVAIIGETNAGKSTLLNVLLNEDKAIVSDIHGTTRDVIEDTVNIGGITFRFIDTAGIRETSDTIESLGIERTFQKLDQAEIVLWMIDSADAISQLTLLSDKILPRCEHKQLILVFNKVELINETQKNELASQFSEHIGSEIESIFISAKQRLHTDELQQRLVAAAHLPTVTQNDVIVTNIRHYEALTRALDAIHRVQEGLDANISGDFLSQDIRECIFHLSDIAGEVTNDMVLQNIFAHFCIGK.

Positions 21, 85, and 124 each coordinate (6S)-5-formyl-5,6,7,8-tetrahydrofolate. Residues G220–H387 form the TrmE-type G domain. N230 is a K(+) binding site. GTP is bound by residues N230–T235, S249–T255, and D274–G277. S234 serves as a coordination point for Mg(2+). 3 residues coordinate K(+): S249, I251, and T254. T255 is a binding site for Mg(2+). K465 provides a ligand contact to (6S)-5-formyl-5,6,7,8-tetrahydrofolate.

The protein belongs to the TRAFAC class TrmE-Era-EngA-EngB-Septin-like GTPase superfamily. TrmE GTPase family. As to quaternary structure, homodimer. Heterotetramer of two MnmE and two MnmG subunits. K(+) serves as cofactor.

Its subcellular location is the cytoplasm. In terms of biological role, exhibits a very high intrinsic GTPase hydrolysis rate. Involved in the addition of a carboxymethylaminomethyl (cmnm) group at the wobble position (U34) of certain tRNAs, forming tRNA-cmnm(5)s(2)U34. This is tRNA modification GTPase MnmE from Bacteroides fragilis (strain YCH46).